Reading from the N-terminus, the 473-residue chain is Eukaryotic translation initiation factor 2 subunit gamma (473 aa).

Positions 40 to 250 (QATINIGTIG…AICNIAPPNY (211 aa)) constitute a tr-type G domain. The segment at 49-56 (GHVAHGKS) is G1. Position 52–57 (52–57 (AHGKSS)) interacts with GTP. The interval 77 to 81 (NITIK) is G2. Positions 135 to 138 (DCPG) are G3. GTP is bound by residues 193–196 (NKMD) and 228–230 (SAQ). The segment at 193-196 (NKMD) is G4. The interval 228 to 230 (SAQ) is G5. The segment at 458-470 (GKVRSGGTLCEVV) is interacts with CDC123.

The protein belongs to the TRAFAC class translation factor GTPase superfamily. Classic translation factor GTPase family. EIF2G subfamily. As to quaternary structure, eukaryotic translation initiation factor 2 eIF2 is a heterotrimeric complex composed of an alpha, a beta and a gamma subunit. The factors eIF-1, eIF-2, eIF-3, TIF5/eIF-5 and methionyl-tRNAi form a multifactor complex (MFC) that may bind to the 40S ribosome.

Its subcellular location is the cytoplasm. The protein localises to the cytosol. It catalyses the reaction GTP + H2O = GDP + phosphate + H(+). In terms of biological role, as a subunit of eukaryotic initiation factor 2 eIF2, involved in the early steps of protein synthesis. In the presence of GTP, eIF-2 forms a ternary complex with initiator tRNA Met-tRNAi and then recruits the 40S ribosomal complex and initiation factors eIF-1, eIF-1A and eIF-3 to form the 43S pre-initiation complex (43S PIC), a step that determines the rate of protein translation. The 43S PIC binds to mRNA and scans downstream to the initiation codon, where it forms a 48S initiation complex by codon-anticodon base pairing. This leads to the displacement of eIF-1 to allow GTPase-activating protein (GAP) eIF-5-mediated hydrolysis of eIF2-bound GTP. Hydrolysis of GTP and release of Pi, which makes GTP hydrolysis irreversible, causes the release of the eIF-2-GDP binary complex from the 40S subunit, an event that is essential for the subsequent joining of the 60S ribosomal subunit to form an elongation-competent 80S ribosome. In order for eIF-2 to recycle and catalyze another round of initiation, the GDP bound to eIF-2 must be exchanged with GTP by way of a reaction catalyzed by GDP-GTP exchange factor (GEF) eIF-2B. The protein is Eukaryotic translation initiation factor 2 subunit gamma of Cryptococcus neoformans var. grubii serotype A (strain H99 / ATCC 208821 / CBS 10515 / FGSC 9487) (Filobasidiella neoformans var. grubii).